Here is a 230-residue protein sequence, read N- to C-terminus: RNA-binding riboflavin kinase RibR (230 aa).

The protein belongs to the RibR family.

The enzyme catalyses riboflavin + ATP = FMN + ADP + H(+). Functionally, may be directly involved in the regulation of the rib genes. C-terminal part of RibR specifically binds to RFN of the rib leader of the riboflavin biosynthetic operon. The RFN element is a sequence within the rib-leader mRNA reported to serve as a receptor for an FMN-dependent riboswitch. Possibly, RibR produces the comodulator FMN through its own N-terminal flavokinase activity. FMN-activated RibR may stabilize the anti-anti terminator structure of RFN mRNA, causing transcription termination of the rib genes in trans. The protein is RNA-binding riboflavin kinase RibR (ribR) of Bacillus subtilis (strain 168).